Consider the following 179-residue polypeptide: MNRLKEKYLKEVTPALMSKFNYKSIMQVPKIEKIVINMGVGDAVQNPKALDSAVEELTLIAGQKPVVTRAKKSIAGFRLRAGMPIGAKVTLRGERMYDFLDKLISVSLPRVRDFRGVSKKSFDGRGNYTLGIKEQLIFPEIDYDKVNKVRGMDIVIVTTAKTDEEARELLTLLGMPFQK.

This sequence belongs to the universal ribosomal protein uL5 family. As to quaternary structure, part of the 50S ribosomal subunit; part of the 5S rRNA/L5/L18/L25 subcomplex. Contacts the 5S rRNA and the P site tRNA. Forms a bridge to the 30S subunit in the 70S ribosome.

In terms of biological role, this is one of the proteins that bind and probably mediate the attachment of the 5S RNA into the large ribosomal subunit, where it forms part of the central protuberance. In the 70S ribosome it contacts protein S13 of the 30S subunit (bridge B1b), connecting the 2 subunits; this bridge is implicated in subunit movement. Contacts the P site tRNA; the 5S rRNA and some of its associated proteins might help stabilize positioning of ribosome-bound tRNAs. This chain is Large ribosomal subunit protein uL5, found in Geobacillus sp. (strain WCH70).